The sequence spans 362 residues: Heme A synthase (362 aa).

The next 5 helical transmembrane spans lie at 12 to 32 (AVKIWLGAIAALIAAMVLVGG), 102 to 122 (VIGLAYLLPFLWFIWRGHLGG), 128 to 148 (LWLIFGLGALQGAVGWWMVAS), 159 to 179 (ERLAIHLTLALVIFAAIVWTL), and 198 to 218 (AAALLALTFVQIFFGALVAGL). His-262 provides a ligand contact to heme. A run of 3 helical transmembrane segments spans residues 264–286 (MLAYALWALAIAHAIDAVRARAG), 291–311 (GAVWFAAALTLQAALGIFTLL), and 314–334 (VPIGLALAHQAVAVLVLMLGV). His-322 is a binding site for heme.

The protein belongs to the COX15/CtaA family. Type 2 subfamily. As to quaternary structure, interacts with CtaB. Heme b is required as a cofactor.

The protein resides in the cell membrane. It catalyses the reaction Fe(II)-heme o + 2 A + H2O = Fe(II)-heme a + 2 AH2. The protein operates within porphyrin-containing compound metabolism; heme A biosynthesis; heme A from heme O: step 1/1. Its function is as follows. Catalyzes the conversion of heme O to heme A by two successive hydroxylations of the methyl group at C8. The first hydroxylation forms heme I, the second hydroxylation results in an unstable dihydroxymethyl group, which spontaneously dehydrates, resulting in the formyl group of heme A. This is Heme A synthase from Rhodopseudomonas palustris (strain BisA53).